We begin with the raw amino-acid sequence, 430 residues long: Glutamate-1-semialdehyde 2,1-aminomutase (430 aa).

At Lys-266 the chain carries N6-(pyridoxal phosphate)lysine.

The protein belongs to the class-III pyridoxal-phosphate-dependent aminotransferase family. HemL subfamily. In terms of assembly, homodimer. It depends on pyridoxal 5'-phosphate as a cofactor.

The protein resides in the cytoplasm. The enzyme catalyses (S)-4-amino-5-oxopentanoate = 5-aminolevulinate. It functions in the pathway porphyrin-containing compound metabolism; protoporphyrin-IX biosynthesis; 5-aminolevulinate from L-glutamyl-tRNA(Glu): step 2/2. This chain is Glutamate-1-semialdehyde 2,1-aminomutase, found in Acidithiobacillus ferrooxidans (strain ATCC 23270 / DSM 14882 / CIP 104768 / NCIMB 8455) (Ferrobacillus ferrooxidans (strain ATCC 23270)).